The following is a 131-amino-acid chain: Arsenate reductase 2 (131 aa).

Active-site nucleophile residues include C10, C82, and C89. 2 cysteine pairs are disulfide-bonded: C10/C82 and C82/C89.

It belongs to the low molecular weight phosphotyrosine protein phosphatase family. Thioredoxin-coupled ArsC subfamily.

It is found in the cytoplasm. The catalysed reaction is arsenate + [thioredoxin]-dithiol + H(+) = arsenite + [thioredoxin]-disulfide + H2O. Catalyzes the reduction of arsenate [As(V)] to arsenite [As(III)]. The polypeptide is Arsenate reductase 2 (Staphylococcus saprophyticus subsp. saprophyticus (strain ATCC 15305 / DSM 20229 / NCIMB 8711 / NCTC 7292 / S-41)).